The chain runs to 24 residues: Grammistin Pp 4b (24 aa).

Exists as aggregates of 3-4 molecules. As to expression, expressed by the skin glands.

It is found in the secreted. Thanks to its abundant amphiphilic alpha-helices, it may integrate into membrane phospholipids, leading to lysis of the membrane. Its hemolytic activity is inhibited by phospholipids, but not by cholesterol. Has antibacterial activity with a broad spectrum against various species of bacteria including both Gram-positive and Gram-negative groups. Also has ichthyotoxic activity. This Pogonoperca punctata (Clown grouper) protein is Grammistin Pp 4b.